Reading from the N-terminus, the 318-residue chain is Deoxyhypusine hydroxylase (318 aa).

Residues histidine 65, glutamate 66, histidine 98, and glutamate 99 each contribute to the Fe cation site. HEAT-like PBS-type repeat units lie at residues 96 to 122, 194 to 220, 225 to 251, and 258 to 284; these read VRHE…YYKE, YRYR…GFKD, FRHE…VLEN, and VRHE…FSKD. Residues histidine 227, glutamate 228, histidine 260, and glutamate 261 each coordinate Fe cation.

This sequence belongs to the deoxyhypusine hydroxylase family. Fe(2+) is required as a cofactor.

The protein resides in the cytoplasm. Its subcellular location is the nucleus. The enzyme catalyses [eIF5A protein]-deoxyhypusine + AH2 + O2 = [eIF5A protein]-hypusine + A + H2O. It participates in protein modification; eIF5A hypusination. Its function is as follows. Catalyzes the hydroxylation of the N(6)-(4-aminobutyl)-L-lysine intermediate to form hypusine, an essential post-translational modification only found in mature eIF-5A factor. The sequence is that of Deoxyhypusine hydroxylase (lia1) from Schizosaccharomyces pombe (strain 972 / ATCC 24843) (Fission yeast).